A 337-amino-acid polypeptide reads, in one-letter code: Ferrochelatase (337 aa).

2 residues coordinate Fe cation: His-189 and Glu-293.

It belongs to the ferrochelatase family.

It is found in the cytoplasm. It carries out the reaction heme b + 2 H(+) = protoporphyrin IX + Fe(2+). The protein operates within porphyrin-containing compound metabolism; protoheme biosynthesis; protoheme from protoporphyrin-IX: step 1/1. In terms of biological role, catalyzes the ferrous insertion into protoporphyrin IX. The chain is Ferrochelatase from Pseudomonas entomophila (strain L48).